Consider the following 68-residue polypeptide: Coiled-coil domain-containing protein 179 (68 aa).

Residues 11-68 are disordered; it reads SQVNPEGPRQHHPSEVTERQLANKRIQNMQHLKKEKRRLNKRFSRPSPIPEPGLLWSS. The span at 18–28 shows a compositional bias: basic and acidic residues; it reads PRQHHPSEVTE. Residues 27 to 53 are a coiled coil; it reads TERQLANKRIQNMQHLKKEKRRLNKRF. The span at 41-54 shows a compositional bias: basic residues; sequence HLKKEKRRLNKRFS.

This chain is Coiled-coil domain-containing protein 179 (CCDC179), found in Homo sapiens (Human).